Consider the following 406-residue polypeptide: Leu/Ile/Val-binding protein homolog 5 (406 aa).

The first 29 residues, 1–29 (MIGTRLPAWTRVLACGVAGLSLMTISAKA), serve as a signal peptide directing secretion.

It belongs to the leucine-binding protein family.

Functionally, component of an amino-acid transport system. The polypeptide is Leu/Ile/Val-binding protein homolog 5 (Brucella abortus (strain 2308)).